We begin with the raw amino-acid sequence, 339 residues long: MNTINASMTVIGAGSYGTALAITLARNGHHVVLWGHDPAHIATLQADRCNAAFLPDVPFPDTLHLESDLATALAASRNILVVVPSHVFGQVLRQIKPLMRPDARVVWATKGLEAETGRLLQDVAREALGDEIPLAVISGPTFAKELAAGLPTAISLAATDETFADDLQQLLHCGKSFRVYSNPDFIGVQLGGAVKNVIAIGAGMSDGIGFGANARTALITRGLAEMSRLGAALGADPTTFMGMAGLGDLVLTCTDNQSRNRRFGMMLGQGADVQSAQEKIGQVVEGYRNTKEVRELAARVGVEMPITEEIYQVLYCGKNAREAALTLLGRTRKDERSSQ.

Ser15, Tyr16, His36, and Lys110 together coordinate NADPH. Positions 110, 139, and 141 each coordinate sn-glycerol 3-phosphate. Ala143 contacts NADPH. Lys195, Asp248, Ser258, Arg259, and Asn260 together coordinate sn-glycerol 3-phosphate. The active-site Proton acceptor is Lys195. Arg259 lines the NADPH pocket. Residues Val283 and Glu285 each contribute to the NADPH site.

This sequence belongs to the NAD-dependent glycerol-3-phosphate dehydrogenase family.

Its subcellular location is the cytoplasm. The enzyme catalyses sn-glycerol 3-phosphate + NAD(+) = dihydroxyacetone phosphate + NADH + H(+). The catalysed reaction is sn-glycerol 3-phosphate + NADP(+) = dihydroxyacetone phosphate + NADPH + H(+). Its pathway is membrane lipid metabolism; glycerophospholipid metabolism. In terms of biological role, catalyzes the reduction of the glycolytic intermediate dihydroxyacetone phosphate (DHAP) to sn-glycerol 3-phosphate (G3P), the key precursor for phospholipid synthesis. The protein is Glycerol-3-phosphate dehydrogenase [NAD(P)+] of Cronobacter sakazakii (strain ATCC BAA-894) (Enterobacter sakazakii).